Consider the following 332-residue polypeptide: Glycerol-3-phosphate dehydrogenase [NAD(P)+] (332 aa).

Positions 11, 12, 32, and 106 each coordinate NADPH. Positions 106, 137, and 139 each coordinate sn-glycerol 3-phosphate. Alanine 141 contacts NADPH. The sn-glycerol 3-phosphate site is built by lysine 192, aspartate 245, serine 255, arginine 256, and asparagine 257. Catalysis depends on lysine 192, which acts as the Proton acceptor. Arginine 256 lines the NADPH pocket. NADPH contacts are provided by valine 280 and glutamate 282.

It belongs to the NAD-dependent glycerol-3-phosphate dehydrogenase family.

It localises to the cytoplasm. It carries out the reaction sn-glycerol 3-phosphate + NAD(+) = dihydroxyacetone phosphate + NADH + H(+). The catalysed reaction is sn-glycerol 3-phosphate + NADP(+) = dihydroxyacetone phosphate + NADPH + H(+). It functions in the pathway membrane lipid metabolism; glycerophospholipid metabolism. In terms of biological role, catalyzes the reduction of the glycolytic intermediate dihydroxyacetone phosphate (DHAP) to sn-glycerol 3-phosphate (G3P), the key precursor for phospholipid synthesis. This is Glycerol-3-phosphate dehydrogenase [NAD(P)+] from Staphylococcus aureus (strain bovine RF122 / ET3-1).